The primary structure comprises 473 residues: Photosystem II CP43 reaction center protein (473 aa).

Residues 1–14 (MKILYSLRRFYHVE) constitute a propeptide that is removed on maturation. The residue at position 15 (Thr-15) is an N-acetylthreonine. A Phosphothreonine modification is found at Thr-15. A run of 5 helical transmembrane segments spans residues 69–93 (LFEVAHFVPEKPMYEQGLILLPHLA), 134–155 (LLGPETLEESFPFFGYVWKDRN), 178–200 (KALYFGGIYDTWAPGGGDVRKIT), 255–275 (KPFAWARRAFVWSGEAYLSYS), and 291–312 (WFNNTAYPSEFYGPTGPEASQA). [CaMn4O5] cluster is bound at residue Glu-367. A helical transmembrane segment spans residues 447–471 (RARAAAAGFEKGIDRDLEPVLYMTP).

Belongs to the PsbB/PsbC family. PsbC subfamily. PSII is composed of 1 copy each of membrane proteins PsbA, PsbB, PsbC, PsbD, PsbE, PsbF, PsbH, PsbI, PsbJ, PsbK, PsbL, PsbM, PsbT, PsbX, PsbY, PsbZ, Psb30/Ycf12, at least 3 peripheral proteins of the oxygen-evolving complex and a large number of cofactors. It forms dimeric complexes. Binds multiple chlorophylls and provides some of the ligands for the Ca-4Mn-5O cluster of the oxygen-evolving complex. It may also provide a ligand for a Cl- that is required for oxygen evolution. PSII binds additional chlorophylls, carotenoids and specific lipids. is required as a cofactor.

The protein localises to the plastid. The protein resides in the chloroplast thylakoid membrane. In terms of biological role, one of the components of the core complex of photosystem II (PSII). It binds chlorophyll and helps catalyze the primary light-induced photochemical processes of PSII. PSII is a light-driven water:plastoquinone oxidoreductase, using light energy to abstract electrons from H(2)O, generating O(2) and a proton gradient subsequently used for ATP formation. The polypeptide is Photosystem II CP43 reaction center protein (Oryza nivara (Indian wild rice)).